Reading from the N-terminus, the 1782-residue chain is AF4/FMR2 family member lilli (1782 aa).

14 disordered regions span residues 42–84, 150–313, 434–515, 605–637, 691–732, 768–820, 839–891, 911–1064, 1091–1126, 1166–1234, 1296–1327, 1386–1420, 1450–1484, and 1674–1701; these read NMED…PSEG, ASSS…PPPE, MPTP…QQQQ, GGSS…NLSR, EKLH…QQRY, GALP…LQIP, KVQP…SNKK, VAAA…AAAS, AGNS…QHKQ, LPQS…KQGQ, ARQH…TPKD, LKQE…EQLS, QESA…QQQQ, and GNTP…GKIV. A compositionally biased stretch (basic and acidic residues) spans 54–80; sequence REKYERQQGIQSDDRETSLFGEPRRLN. Composition is skewed to low complexity over residues 164-180 and 211-260; these read QQQQ…QQQQ and PSSS…MSSP. Over residues 435-447 the composition is skewed to pro residues; it reads PTPPKASPTPPAI. Threonine 443 is subject to Phosphothreonine. Basic and acidic residues predominate over residues 450–463; it reads MKTEKNHSLEKQDS. Residues 465-475 are compositionally biased toward acidic residues; the sequence is LENDLELSESD. A phosphoserine mark is found at serine 472 and serine 474. 2 stretches are compositionally biased toward low complexity: residues 484-515 and 609-622; these read SAGN…QQQQ and GSCM…SSSN. A compositionally biased stretch (polar residues) spans 623 to 634; sequence KTPSPTDSNRWN. Positions 691-701 are enriched in basic and acidic residues; the sequence is EKLHDEPRHVG. Low complexity-rich tracts occupy residues 714–730 and 782–805; these read QQQQ…QQQQ and SDSG…GGSS. Residues 859 to 869 show a composition bias toward basic residues; the sequence is PRQKKPRKKKM. Residues serine 878 and serine 879 each carry the phosphoserine modification. The a.T hook DNA-binding region spans 920 to 932; it reads KKGRGRPRKQAQQ. Residues 929–972 are compositionally biased toward low complexity; it reads QAQQQQQQQQQQLQQSGNLSSASASSSQAKGPTLTAAKKPLAKA. A phosphoserine mark is found at serine 949 and serine 951. Residues 973-982 show a composition bias toward polar residues; that stretch reads SVSNSNSTAP. 4 stretches are compositionally biased toward low complexity: residues 996-1018, 1033-1064, 1105-1116, and 1174-1196; these read SNSS…TMAA, SSSS…AAAS, SVGSSSNSSSSS, and SSSD…SSSS. The segment covering 1308-1318 has biased composition (polar residues); the sequence is AQQNGHLSSRS. Positions 1450-1460 are enriched in polar residues; sequence QESAANGSPNK. Serine 1457 carries the post-translational modification Phosphoserine. Composition is skewed to low complexity over residues 1461-1484 and 1674-1694; these read LQQQ…QQQQ and GNTP…SGSN.

Belongs to the AF4 family.

It is found in the nucleus. Functionally, has a role in transcriptional regulation. Acts in parallel with the Ras/MAPK and the PI3K/PKB pathways in the control of cell identity and cellular growth. Essential for regulation of the cytoskeleton and cell growth but not for cell proliferation or growth rate. Required specifically for the microtubule-based basal transport of lipid droplets. Plays a partially redundant function downstream of Raf in cell fate specification in the developing eye. Pair-rule protein that regulates embryonic cellularization, gastrulation and segmentation. The protein is AF4/FMR2 family member lilli of Drosophila mojavensis (Fruit fly).